A 619-amino-acid polypeptide reads, in one-letter code: Nuclear hormone receptor family member nhr-6 (619 aa).

A compositionally biased stretch (polar residues) spans 1 to 18 (MEQLSIQTDELQDQFSNC). Disordered regions lie at residues 1-29 (MEQLSIQTDELQDQFSNCSPASVDSSYSS), 58-86 (MSKNSSCSSSFDYGEFGPSSSSRKGSKTT), 103-134 (QVNTVPKPTKTEVESIPEEFEQKPSSSSHRLP), and 196-232 (QHFPVSDSRRGSQGTTSSSNNTGGTPSPHSSSLPTSP). The span at 19–29 (SPASVDSSYSS) shows a compositional bias: low complexity. Positions 125–134 (KPSSSSHRLP) are enriched in polar residues. Residues 206–232 (GSQGTTSSSNNTGGTPSPHSSSLPTSP) show a composition bias toward low complexity. Residues 265–340 (DKMCAVCNDR…VGMVKEIVRH (76 aa)) constitute a DNA-binding region (nuclear receptor). NR C4-type zinc fingers lie at residues 268 to 288 (CAVCNDRAVCLHYGARTCEGC) and 304 to 328 (CAGNKTCPIDKRYRSRCQYCRYQKC). The segment at 345–365 (GRRGRLSSKTKLARSEDQPSP) is disordered. The span at 346–356 (RRGRLSSKTKL) shows a compositional bias: basic residues. The NR LBD domain maps to 365–600 (PPLPLLALMG…STDAPPACGS (236 aa)). Positions 589–600 (LRSTDAPPACGS) are AF-2.

This sequence belongs to the nuclear hormone receptor family. NR4 subfamily. In terms of tissue distribution, in hermaphrodites, expressed in the developing spermatheca and dorsal uterus. Expression includes the 8 cells of the dorsal somatic gonad primordium and the sujc cells that form the core of the spermatheca-uterine valve. Expressed in the precursor cells of the spermatheca-sheath lineages (SS cells) and in the precursors and descendents of the dorsal-uterine lineage (DU cells). In both hermaphroditic and male animals, expressed in a pair of head chemosensory neurons.

It localises to the nucleus. Its function is as follows. Transcriptional activator that induces gene expression by binding to the NGFI-B response element (NBRE) 5'-AAAGGTCA-3'. Required for proper morphogenesis of the spermatheca and the spermatheca-uterine valve formation. Promotes cell proliferation and differentiation of the spermatheca precursor cells during spermatheca development in larval stage L4. Might play a role in promoting G1/S phase progression in the spermatheca precursor cell lineage. Also required for the differentiation of the spermatheca-uterine junction core (sujc) cells which are generating the spermatheca-uterine valve. The polypeptide is Nuclear hormone receptor family member nhr-6 (nhr-6) (Caenorhabditis elegans).